Here is a 487-residue protein sequence, read N- to C-terminus: Protein Optix (487 aa).

A DNA-binding region (homeobox) is located at residues 154–214; it reads WDGEQKTHCF…KNRRQRDRAA (61 aa). 2 disordered regions span residues 182–330 and 443–463; these read NPTK…GAGP and ASVG…GYHH. Residues 255-277 show a composition bias toward polar residues; that stretch reads GTHSPVPSSLQLQHSPGSTSNGA. A compositionally biased stretch (basic and acidic residues) spans 278–293; the sequence is NDREESLSVDDDKPRD. Positions 294 to 312 are enriched in low complexity; sequence LSGSLPLPLSLPLPLASPT. The span at 321 to 330 shows a compositional bias: gly residues; the sequence is GYGGGAGAGP.

This sequence belongs to the SIX/Sine oculis homeobox family. In terms of tissue distribution, expressed during early development of the head. First expressed in a band around the anterior end of stage 5 blastoderm embryo, at 93% to 85% egg length. By gastrula stage, site of expression shifts to the dorsal-anterior region. At stage 12, expression is found in the clypeolabrum, the stomodaeum, and in ectoderm dorsal to the future supraesophageal ganglion.

The protein resides in the nucleus. Functionally, may be involved in head or eye development; development of the clypeolabrum and several head sensory organs. This Drosophila melanogaster (Fruit fly) protein is Protein Optix (Optix).